The primary structure comprises 235 residues: Probable tetraspanin tspB (235 aa).

Residues 1–23 (MVDTTNLIPNTPRYLKVPLIAFN) lie on the Cytoplasmic side of the membrane. The chain crosses the membrane as a helical span at residues 24 to 44 (TILWVLGLVLVIIGSIGVSFF). The Extracellular segment spans residues 45–68 (SNFKDFTKVSKASAALSNLTTGAP). An N-linked (GlcNAc...) asparagine glycan is attached at asparagine 62. The helical transmembrane segment at 69–89 (AGVLVIGIFFVILTVIGCFVA) threads the bilayer. Topologically, residues 90 to 93 (GKEK) are cytoplasmic. The chain crosses the membrane as a helical span at residues 94–114 (LVGLVIYTMLMLIILVALIGV). Residues 115 to 200 (GGKALTLHND…ISSNLYLVGA (86 aa)) lie on the Extracellular side of the membrane. N-linked (GlcNAc...) asparagine glycans are attached at residues asparagine 143 and asparagine 159. A helical transmembrane segment spans residues 201–221 (AAVSIGVIEFICMLFALFLII). Topologically, residues 222-235 (RICRAPRTKSYDYQ) are cytoplasmic.

Belongs to the tetraspanin (TM4SF) family.

It is found in the membrane. The protein is Probable tetraspanin tspB (tspB) of Dictyostelium discoideum (Social amoeba).